The primary structure comprises 262 residues: 3-methyl-2-oxobutanoate hydroxymethyltransferase (262 aa).

2 residues coordinate Mg(2+): D44 and D83. Residues 44-45 (DS), D83, and K112 each bind 3-methyl-2-oxobutanoate. Residue E114 participates in Mg(2+) binding. E177 (proton acceptor) is an active-site residue.

It belongs to the PanB family. As to quaternary structure, homodecamer; pentamer of dimers. Mg(2+) serves as cofactor.

It is found in the cytoplasm. It carries out the reaction 3-methyl-2-oxobutanoate + (6R)-5,10-methylene-5,6,7,8-tetrahydrofolate + H2O = 2-dehydropantoate + (6S)-5,6,7,8-tetrahydrofolate. It functions in the pathway cofactor biosynthesis; coenzyme A biosynthesis. Functionally, catalyzes the reversible reaction in which hydroxymethyl group from 5,10-methylenetetrahydrofolate is transferred onto alpha-ketoisovalerate to form ketopantoate. The chain is 3-methyl-2-oxobutanoate hydroxymethyltransferase from Metallosphaera sedula (strain ATCC 51363 / DSM 5348 / JCM 9185 / NBRC 15509 / TH2).